We begin with the raw amino-acid sequence, 309 residues long: NADH-cytochrome b5 reductase 1 (309 aa).

The helical transmembrane segment at 30 to 50 (FVPYAVALTAILAGLKLFTGG) threads the bilayer. The FAD-binding FR-type domain occupies 60–165 (TEFQEFVLKE…RGPKGAMVYT (106 aa)). Residues 145–160 (TTLK…GPKG) and 171–208 (HIGM…KLDL) each bind FAD.

This sequence belongs to the flavoprotein pyridine nucleotide cytochrome reductase family. Monomer. Component of the 2-(3-amino-3-carboxypropyl)histidine synthase complex composed of dph1, dph2, dph3 and a NADH-dependent reductase, predominantly cbr1. FAD is required as a cofactor.

Its subcellular location is the mitochondrion outer membrane. It carries out the reaction 2 Fe(III)-[cytochrome b5] + NADH = 2 Fe(II)-[cytochrome b5] + NAD(+) + H(+). It catalyses the reaction 2 Fe(3+)-[Dph3] + NADH = 2 Fe(2+)-[Dph3] + NAD(+) + H(+). The protein operates within protein modification; peptidyl-diphthamide biosynthesis. Its function is as follows. NADH-dependent reductase for dph3 and cytochrome b5. Required for the first step of diphthamide biosynthesis, a post-translational modification of histidine which occurs in elongation factor 2. Dph1 and dph2 transfer a 3-amino-3-carboxypropyl (ACP) group from S-adenosyl-L-methionine (SAM) to a histidine residue, the reaction is assisted by a reduction system comprising dph3 and a NADH-dependent reductase, predominantly cbr1. By reducing dph3, also involved in the formation of the tRNA wobble base modification mcm5s 2U (5-methoxycarbonylmethyl-2-thiouridine), mediated by the elongator complex. The cytochrome b5/NADH cytochrome b5 reductase electron transfer system supports the catalytic activity of several sterol biosynthetic enzymes. The sequence is that of NADH-cytochrome b5 reductase 1 (cbr1) from Neosartorya fischeri (strain ATCC 1020 / DSM 3700 / CBS 544.65 / FGSC A1164 / JCM 1740 / NRRL 181 / WB 181) (Aspergillus fischerianus).